The primary structure comprises 294 residues: 1D-myo-inositol 2-acetamido-2-deoxy-alpha-D-glucopyranoside deacetylase (294 aa).

Zn(2+) is bound by residues H14, D17, and H149.

Belongs to the MshB deacetylase family. Requires Zn(2+) as cofactor.

The catalysed reaction is 1D-myo-inositol 2-acetamido-2-deoxy-alpha-D-glucopyranoside + H2O = 1D-myo-inositol 2-amino-2-deoxy-alpha-D-glucopyranoside + acetate. Catalyzes the deacetylation of 1D-myo-inositol 2-acetamido-2-deoxy-alpha-D-glucopyranoside (GlcNAc-Ins) in the mycothiol biosynthesis pathway. The sequence is that of 1D-myo-inositol 2-acetamido-2-deoxy-alpha-D-glucopyranoside deacetylase from Rhodococcus erythropolis (strain PR4 / NBRC 100887).